A 200-amino-acid chain; its full sequence is MEKPYNKNEGNLENEGKPEDEVEPDDEGKSDEEEKPDAEGKTECEGKRKAEGEPGDEGQLEDKGSQEKQGKSEGEGKPQGEGKPASQAKPEGQPRAAEKRPAGDYVPRKAKRKTDRGTDDSPKDSQEDLQERHLSSEEMMRECGDVSRAQEELRKKQKMGGFHWMQRDVQDPFAPRGQRGVRGVRGGGRGQRGLHDIPYL.

The segment at 1–200 (MEKPYNKNEG…QRGLHDIPYL (200 aa)) is disordered. Residues 20-36 (DEVEPDDEGKSDEEEKP) are compositionally biased toward acidic residues. Position 30 is a phosphoserine (serine 30). Basic and acidic residues-rich tracts occupy residues 37 to 52 (DAEG…KAEG), 60 to 80 (LEDK…KPQG), and 115 to 154 (DRGT…EELR). Serine 65 is modified (phosphoserine).

It belongs to the TFS-II family. TFA subfamily.

It localises to the nucleus. Its function is as follows. May be involved in transcriptional regulation. This is Transcription elongation factor A protein-like 6 (TCEAL6) from Homo sapiens (Human).